Reading from the N-terminus, the 101-residue chain is NAD(P)H-quinone oxidoreductase subunit 4L, chloroplastic (101 aa).

Helical transmembrane passes span 2–22 (MLEHVLVLSAYLFSIGIYGLI), 32–52 (MCLELILNAVNINLVTFSDFF), and 61–81 (IFSIFVIAIAAAEAAIGLAIV).

It belongs to the complex I subunit 4L family. As to quaternary structure, NDH is composed of at least 16 different subunits, 5 of which are encoded in the nucleus.

The protein resides in the plastid. Its subcellular location is the chloroplast thylakoid membrane. The catalysed reaction is a plastoquinone + NADH + (n+1) H(+)(in) = a plastoquinol + NAD(+) + n H(+)(out). It carries out the reaction a plastoquinone + NADPH + (n+1) H(+)(in) = a plastoquinol + NADP(+) + n H(+)(out). Its function is as follows. NDH shuttles electrons from NAD(P)H:plastoquinone, via FMN and iron-sulfur (Fe-S) centers, to quinones in the photosynthetic chain and possibly in a chloroplast respiratory chain. The immediate electron acceptor for the enzyme in this species is believed to be plastoquinone. Couples the redox reaction to proton translocation, and thus conserves the redox energy in a proton gradient. The protein is NAD(P)H-quinone oxidoreductase subunit 4L, chloroplastic of Cicer arietinum (Chickpea).